We begin with the raw amino-acid sequence, 182 residues long: Nucleosome assembly protein 1-like 5 (182 aa).

The tract at residues 1 to 71 (MADSENQGPA…APKPKNDFIE (71 aa)) is disordered. Composition is skewed to low complexity over residues 7–21 (QGPAEPSQAAAAAEA) and 28–49 (AEGGAQGGDCDSAAGDPDSAAG). A coiled-coil region spans residues 81–107 (VLALKKLQKRCDKIEAKFDKEFQALEK). Residues 134–182 (LEGEEEEEEEYEDDEEEGEDEEEEEAAAEAAAGAKHDDAHAEMPDDAKK) form a disordered region. Acidic residues predominate over residues 135 to 160 (EGEEEEEEEYEDDEEEGEDEEEEEAA). Residues 167-182 (AKHDDAHAEMPDDAKK) are compositionally biased toward basic and acidic residues.

It belongs to the nucleosome assembly protein (NAP) family. As to expression, predominantly expressed in brain.

It localises to the nucleus. This is Nucleosome assembly protein 1-like 5 (NAP1L5) from Homo sapiens (Human).